The primary structure comprises 91 residues: MARSIKKGPFIDAHLLKKVDAARASNDKRPIKTWSRRSTVLPDFVGLTIAVHNGRQHIPVYVSENMVGHKLGEFALTRTFKGHAASKKAKR.

This sequence belongs to the universal ribosomal protein uS19 family.

Protein S19 forms a complex with S13 that binds strongly to the 16S ribosomal RNA. This Azoarcus sp. (strain BH72) protein is Small ribosomal subunit protein uS19.